The primary structure comprises 197 residues: Probable molybdenum cofactor guanylyltransferase (197 aa).

GTP-binding positions include 12–14, Lys-24, Asp-71, and Asp-103; that span reads LAG. Asp-103 is a Mg(2+) binding site.

Belongs to the MobA family. The cofactor is Mg(2+).

The protein localises to the cytoplasm. The enzyme catalyses Mo-molybdopterin + GTP + H(+) = Mo-molybdopterin guanine dinucleotide + diphosphate. Transfers a GMP moiety from GTP to Mo-molybdopterin (Mo-MPT) cofactor (Moco or molybdenum cofactor) to form Mo-molybdopterin guanine dinucleotide (Mo-MGD) cofactor. The sequence is that of Probable molybdenum cofactor guanylyltransferase from Mycobacterium avium (strain 104).